The sequence spans 544 residues: Chaperonin GroEL (544 aa).

ATP is bound by residues 30-33 (TLGP), lysine 51, 87-91 (DGTTT), glycine 415, 478-480 (DVA), and aspartate 494. The tract at residues 524–544 (PEKEKKPATPAGAGGMGDMEY) is disordered. Residues 535–544 (GAGGMGDMEY) are compositionally biased toward gly residues.

This sequence belongs to the chaperonin (HSP60) family. Forms a cylinder of 14 subunits composed of two heptameric rings stacked back-to-back. Interacts with the co-chaperonin GroES.

It localises to the cytoplasm. The catalysed reaction is ATP + H2O + a folded polypeptide = ADP + phosphate + an unfolded polypeptide.. Together with its co-chaperonin GroES, plays an essential role in assisting protein folding. The GroEL-GroES system forms a nano-cage that allows encapsulation of the non-native substrate proteins and provides a physical environment optimized to promote and accelerate protein folding. The protein is Chaperonin GroEL of Methylacidiphilum infernorum (isolate V4) (Methylokorus infernorum (strain V4)).